Reading from the N-terminus, the 780-residue chain is ATP-dependent DNA helicase RecG (780 aa).

Domain regions lie at residues 1–350 (MLCS…GGIP), 351–549 (KKIE…EMPP), and 550–780 (GRKE…IEVG). The wedge domain stretch occupies residues 154 to 252 (RKIFKLNDLL…VTPKEGEYVR (99 aa)). The ATP site is built by phenylalanine 367, leucine 369, glycine 399, serine 400, glycine 401, lysine 402, threonine 403, and arginine 436. The Helicase ATP-binding domain occupies 383 to 544 (DMISEKPMNR…FYGDLDVTVI (162 aa)). The short motif at 497 to 500 (DEQH) is the DEAH box element. The region spanning 563–728 (RVNEVYEFVR…EYDLKTRGPG (166 aa)) is the Helicase C-terminal domain.

This sequence belongs to the helicase family. RecG subfamily. In terms of assembly, monomer.

It catalyses the reaction Couples ATP hydrolysis with the unwinding of duplex DNA by translocating in the 3'-5' direction.. The enzyme catalyses ATP + H2O = ADP + phosphate + H(+). Plays a critical role in recombination and DNA repair. Helps process Holliday junction intermediates to mature products by catalyzing branch migration. Has replication fork (Y-DNA) regression activity, unwinds stalled or blocked replication forks to make a HJ that can be resolved. Has a DNA unwinding activity characteristic of a DNA helicase with 3'-5' polarity. Might be a DNA translocase rather than a bona fide helicase. The protein is ATP-dependent DNA helicase RecG of Thermotoga maritima (strain ATCC 43589 / DSM 3109 / JCM 10099 / NBRC 100826 / MSB8).